A 391-amino-acid polypeptide reads, in one-letter code: Elongation factor Tu 1 (391 aa).

The tr-type G domain maps to 10-201 (KPHVNIGTIG…AVDSYIPTPE (192 aa)). Residues 19-26 (GHVDHGKT) form a G1 region. 19 to 26 (GHVDHGKT) provides a ligand contact to GTP. Threonine 26 provides a ligand contact to Mg(2+). The segment at 55 to 59 (GITIS) is G2. The segment at 76–79 (DCPG) is G3. GTP-binding positions include 76–80 (DCPGH) and 131–134 (NKVD). Residues 131-134 (NKVD) are G4. The tract at residues 169-171 (SAL) is G5.

The protein belongs to the TRAFAC class translation factor GTPase superfamily. Classic translation factor GTPase family. EF-Tu/EF-1A subfamily. In terms of assembly, monomer.

It is found in the cytoplasm. The enzyme catalyses GTP + H2O = GDP + phosphate + H(+). Its function is as follows. GTP hydrolase that promotes the GTP-dependent binding of aminoacyl-tRNA to the A-site of ribosomes during protein biosynthesis. This chain is Elongation factor Tu 1, found in Rhizobium etli (strain ATCC 51251 / DSM 11541 / JCM 21823 / NBRC 15573 / CFN 42).